The sequence spans 466 residues: Vimentin (466 aa).

The segment covering 1 to 13 has biased composition (low complexity); that stretch reads MSTRSVSSSSYRR. The segment at 1–32 is disordered; it reads MSTRSVSSSSYRRMFGGPGTGSRPSSTRSYVT. N-acetylserine is present on serine 2. Residues 2 to 95 form a head region; that stretch reads STRSVSSSSY…FSLADAINTE (94 aa). Serine 5, serine 7, serine 8, serine 9, and serine 10 each carry phosphoserine. An O-linked (GlcNAc) serine; alternate glycan is attached at serine 7. Threonine 20 is subject to Phosphothreonine. Residues 21–32 are compositionally biased toward low complexity; it reads GSRPSSTRSYVT. Serine 25 and serine 26 each carry phosphoserine. A glycan (O-linked (GlcNAc) threonine) is linked at threonine 33. Residues serine 34, serine 39, serine 42, serine 47, serine 49, and serine 51 each carry the phosphoserine modification. The O-linked (GlcNAc) serine; alternate glycan is linked to serine 34. Residue tyrosine 53 is modified to Phosphotyrosine. 2 positions are modified to phosphoserine: serine 55 and serine 56. Residue tyrosine 61 is modified to Phosphotyrosine. 5 positions are modified to phosphoserine: serine 66, serine 72, serine 73, serine 83, and serine 87. A coil 1A region spans residues 96 to 131; that stretch reads FKNTRTNEKVELQELNDRFANYIDKVRFLEQQNKIL. The stretch at 96–131 forms a coiled coil; the sequence is FKNTRTNEKVELQELNDRFANYIDKVRFLEQQNKIL. The IF rod domain maps to 103–411; it reads EKVELQELND…KLLEGEESRI (309 aa). Lysine 104 participates in a covalent cross-link: Glycyl lysine isopeptide (Lys-Gly) (interchain with G-Cter in SUMO2). Position 117 is a phosphotyrosine (tyrosine 117). Lysine 120, lysine 129, and lysine 139 each carry N6-acetyllysine; alternate. An N6-succinyllysine; alternate mark is found at lysine 120 and lysine 129. Glycyl lysine isopeptide (Lys-Gly) (interchain with G-Cter in SUMO2); alternate cross-links involve residues lysine 120, lysine 129, and lysine 139. Residues 132–153 form a linker 1 region; that stretch reads LAELEQLKGQGKSRLGDLYEEE. Residue serine 144 is modified to Phosphoserine. Positions 154–245 form a coiled coil; the sequence is MRELRRQVDQ…KLHDEEIQEL (92 aa). Positions 154-245 are coil 1B; that stretch reads MRELRRQVDQ…KLHDEEIQEL (92 aa). Lysine 168 carries the post-translational modification N6-acetyllysine. Lysine 188 carries the N6-acetyllysine; alternate modification. Lysine 188 carries the N6-succinyllysine; alternate modification. A Phosphoserine modification is found at serine 214. Lysine 223 is subject to N6-acetyllysine; alternate. Lysine 223 is covalently cross-linked (Glycyl lysine isopeptide (Lys-Gly) (interchain with G-Cter in SUMO2); alternate). Serine 226 carries the phosphoserine modification. Lysine 235 carries the N6-acetyllysine modification. The tract at residues 246-268 is linker 12; the sequence is QAQIQDQHVQIDMDVSKPDLTAA. Lysine 262 is covalently cross-linked (Glycyl lysine isopeptide (Lys-Gly) (interchain with G-Cter in SUMO2)). Residues 269–407 form a coil 2 region; it reads LRDVRQQYES…ATYRKLLEGE (139 aa). Lysine 294 carries the post-translational modification N6-acetyllysine; alternate. At lysine 294 the chain carries N6-succinyllysine; alternate. Lysine 294 participates in a covalent cross-link: Glycyl lysine isopeptide (Lys-Gly) (interchain with G-Cter in SUMO2); alternate. A Phosphoserine modification is found at serine 299. A coiled-coil region spans residues 303 to 407; it reads NRNNDALRQA…ATYRKLLEGE (105 aa). A Glycyl lysine isopeptide (Lys-Gly) (interchain with G-Cter in SUMO2) cross-link involves residue lysine 313. Serine 325 carries the post-translational modification Phosphoserine. The [IL]-x-C-x-x-[DE] motif motif lies at 326-329; sequence LTCE. At lysine 373 the chain carries N6-acetyllysine; alternate. Lysine 373 participates in a covalent cross-link: Glycyl lysine isopeptide (Lys-Gly) (interchain with G-Cter in SUMO2); alternate. The tract at residues 408 to 466 is tail; the sequence is ESRIALPLPNFSSLNLRETNLDSLPLVDTHSKRTLLIKTVETRDGQVINETSQHHDDLE. Phosphoserine is present on residues serine 409, serine 419, and serine 420. At threonine 426 the chain carries Phosphothreonine. At serine 430 the chain carries Phosphoserine. Threonine 436 carries the post-translational modification Phosphothreonine. Serine 438 bears the Phosphoserine mark. Lysine 439 is covalently cross-linked (Glycyl lysine isopeptide (Lys-Gly) (interchain with G-Cter in SUMO2)). Lysine 445 is subject to N6-acetyllysine; alternate. At lysine 445 the chain carries N6-succinyllysine; alternate. Lysine 445 is covalently cross-linked (Glycyl lysine isopeptide (Lys-Gly) (interchain with G-Cter in SUMO2); alternate). Lysine 445 participates in a covalent cross-link: Glycyl lysine isopeptide (Lys-Gly) (interchain with G-Cter in SUMO1); alternate. Residues threonine 446 and threonine 458 each carry the phosphothreonine modification. Phosphoserine is present on serine 459.

The protein belongs to the intermediate filament family. Homomer assembled from elementary dimers. Identified in complexes that contain VIM, EZR, AHNAK, BFSP1, BFSP2, ANK2, PLEC, PRX and spectrin. Interacts with BCAS3. Interacts with LGSN. Interacts with SYNM. Interacts (via rod region) with PLEC (via CH 1 domain). Interacts with STK33. Interacts with LARP6. Interacts with RAB8B. Interacts with TOR1A; the interaction associates TOR1A with the cytoskeleton. Interacts with TOR1AIP1. Interacts with TOR1AIP1. Interacts with DIAPH1. Interacts with EPPK1; interaction is dependent of higher-order structure of intermediate filament. Interacts with the non-receptor tyrosine kinase SRMS; the interaction leads to phosphorylation of VIM. Interacts with NOD2. Interacts (via head region) with CORO1C. Interacts with HDGF. Interacts with PRKCE (via phorbol-ester/DAG-type 2 domain). Interacts with BFSP2. Interacts with PPL. Interacts with PKP1 and PKP2. Interacts with SCRIB (via PDZ domains); the interaction protects SCRIB from proteasomal degradation and facilitates SCRIB localization to intermediate filaments, the interaction is reduced by cell contact inhibition. Post-translationally, filament disassembly during mitosis is promoted by phosphorylation at Ser-55 as well as by nestin. One of the most prominent phosphoproteins in various cells of mesenchymal origin. Phosphorylation is enhanced during cell division, at which time vimentin filaments are significantly reorganized. Phosphorylation by PKN1 inhibits the formation of filaments. Phosphorylated at Ser-56 by CDK5 during neutrophil secretion in the cytoplasm. Phosphorylated by STK33. Phosphorylated on tyrosine residues by SRMS. O-glycosylated during cytokinesis at sites identical or close to phosphorylation sites, this interferes with the phosphorylation status. In terms of processing, S-nitrosylation is induced by interferon-gamma and oxidatively-modified low-densitity lipoprotein (LDL(ox)) possibly implicating the iNOS-S100A8/9 transnitrosylase complex.

It is found in the cytoplasm. Its subcellular location is the cytoskeleton. It localises to the nucleus matrix. The protein resides in the cell membrane. Vimentins are class-III intermediate filaments found in various non-epithelial cells, especially mesenchymal cells. Vimentin is attached to the nucleus, endoplasmic reticulum, and mitochondria, either laterally or terminally. Plays a role in cell directional movement, orientation, cell sheet organization and Golgi complex polarization at the cell migration front. Protects SCRIB from proteasomal degradation and facilitates its localization to intermediate filaments in a cell contact-mediated manner. In terms of biological role, involved with LARP6 in the stabilization of type I collagen mRNAs for CO1A1 and CO1A2. The polypeptide is Vimentin (VIM) (Canis lupus familiaris (Dog)).